The following is a 400-amino-acid chain: Elongation factor Tu (400 aa).

In terms of domain architecture, tr-type G spans 10-208 (KPHLNVGTIG…TMDEYFPEPQ (199 aa)). Residues 19–26 (GHIDHGKT) form a G1 region. 19 to 26 (GHIDHGKT) is a GTP binding site. Residue Thr26 participates in Mg(2+) binding. Residues 60–64 (GITIN) are G2. The interval 81 to 84 (DCPG) is G3. GTP is bound by residues 81–85 (DCPGH) and 136–139 (NKTD). The segment at 136–139 (NKTD) is G4. The tract at residues 174–176 (SAL) is G5.

It belongs to the TRAFAC class translation factor GTPase superfamily. Classic translation factor GTPase family. EF-Tu/EF-1A subfamily. As to quaternary structure, monomer.

It is found in the cytoplasm. The enzyme catalyses GTP + H2O = GDP + phosphate + H(+). Its function is as follows. GTP hydrolase that promotes the GTP-dependent binding of aminoacyl-tRNA to the A-site of ribosomes during protein biosynthesis. The protein is Elongation factor Tu of Thermosipho melanesiensis (strain DSM 12029 / CIP 104789 / BI429).